Reading from the N-terminus, the 1098-residue chain is Transcription elongation regulator 1 (1098 aa).

Over residues 1 to 15 (MAERGGDGGESERFN) the composition is skewed to basic and acidic residues. The interval 1-105 (MAERGGDGGE…RPPFMPPPMS (105 aa)) is disordered. Serine 11 is subject to Phosphoserine. At arginine 20 the chain carries Omega-N-methylarginine. 4 positions are modified to asymmetric dimethylarginine: arginine 28, arginine 30, arginine 41, and arginine 48. Residues 32–105 (PAPPPNAVMR…RPPFMPPPMS (74 aa)) show a composition bias toward pro residues. The 34-residue stretch at 131 to 164 (PPTEEIWVENKTPDGKVYYYNARTRESAWTKPDG) folds into the WW 1 domain. A coiled-coil region spans residues 184 to 244 (QAQAQAQAQA…AQAQAQAQVQ (61 aa)). A compositionally biased stretch (low complexity) spans 259 to 333 (STPTTSSPAP…PTATPVQTVP (75 aa)). The disordered stretch occupies residues 259 to 348 (STPTTSSPAP…TLPPAVPHSV (90 aa)). Pro residues predominate over residues 334-344 (QPHPQTLPPAV). A WW 2 domain is found at 429 to 462 (ATAVSEWTEYKTADGKTYYYNNRTLESTWEKPQE). Composition is skewed to basic and acidic residues over residues 469 to 481 (LEEK…KEPS) and 496 to 506 (EEPIKEIKEEP). The disordered stretch occupies residues 469–526 (LEEKIKEPIKEPSEEPLPMETEEEDPKEEPIKEIKEEPKEEEMTEEEKAAQKAKPVAT). Glycyl lysine isopeptide (Lys-Gly) (interchain with G-Cter in SUMO2) cross-links involve residues lysine 503 and lysine 507. Residues 528 to 561 (PIPGTPWCVVWTGDERVFFYNPTTRLSMWDRPDD) form the WW 3 domain. The stretch at 606–655 (AIKEEQELMEEINEDEPVKAKKRKRDDNKDIDSEKEAAMEAEIKAARERA) forms a coiled coil. Lysine 608 is covalently cross-linked (Glycyl lysine isopeptide (Lys-Gly) (interchain with G-Cter in SUMO2)). The tract at residues 615–640 (EEINEDEPVKAKKRKRDDNKDIDSEK) is disordered. A Nuclear localization signal motif is present at residues 626-630 (KKRKR). The segment covering 630-640 (RDDNKDIDSEK) has biased composition (basic and acidic residues). Position 638 is a phosphoserine (serine 638). FF domains follow at residues 659-712 (LEAR…YVKT), 725-779 (IMQA…FVAA), and 791-846 (RGEK…YIEK). Serine 834 carries the phosphoserine modification. Residues 844–906 (IEKIAKNLDS…EEAIQNFKAL (63 aa)) adopt a coiled-coil conformation. Positions 870-895 (REREREVQKARSEQTKEIDREREQHK) are disordered. FF domains lie at 896-952 (REEA…HIEA), 954-1010 (TKKK…YIRD), and 1012-1077 (YITA…YVDD). Serine 933 carries the post-translational modification Phosphoserine. The segment at 1076–1098 (DDLDRRGPPPPPTASEPTRRSTK) is disordered.

In terms of assembly, binds formin. Interacts (via the second WW domain) with TREX1 (via proline-rich region). Binds RNA polymerase II, HD and SF1. In terms of tissue distribution, detected in brain neurons.

Its subcellular location is the nucleus. In terms of biological role, transcription factor that binds RNA polymerase II and inhibits the elongation of transcripts from target promoters. Regulates transcription elongation in a TATA box-dependent manner. Necessary for TAT-dependent activation of the human immunodeficiency virus type 1 (HIV-1) promoter. The chain is Transcription elongation regulator 1 (TCERG1) from Homo sapiens (Human).